The chain runs to 64 residues: Large ribosomal subunit protein bL35 (64 aa).

A compositionally biased stretch (basic residues) spans 1–26; that stretch reads MPKMKSHRGASKRFKRTASGKLKRSH. A disordered region spans residues 1 to 42; it reads MPKMKSHRGASKRFKRTASGKLKRSHAYTSHLFANKSTKAKR.

The protein belongs to the bacterial ribosomal protein bL35 family.

The polypeptide is Large ribosomal subunit protein bL35 (Exiguobacterium sp. (strain ATCC BAA-1283 / AT1b)).